The primary structure comprises 474 residues: PRAME family member 14 (474 aa).

5 LRR repeats span residues 15–38, 204–229, 271–294, 319–342, and 391–414; these read QSLL…LYLP, LNSI…CYLK, LLKI…LQNP, LGYL…PLGA, and MGAL…TYPA.

It belongs to the PRAME family.

The protein is PRAME family member 14 of Homo sapiens (Human).